A 133-amino-acid chain; its full sequence is Nickel-responsive regulator (133 aa).

4 residues coordinate Ni(2+): His-76, His-87, His-89, and Cys-95.

The protein belongs to the transcriptional regulatory CopG/NikR family. As to quaternary structure, homotetramer. Ni(2+) is required as a cofactor.

Functionally, transcriptional repressor of the nikABCDE operon. Is active in the presence of excessive concentrations of intracellular nickel. The sequence is that of Nickel-responsive regulator from Escherichia coli O6:K15:H31 (strain 536 / UPEC).